Consider the following 379-residue polypeptide: Succinyl-diaminopimelate desuccinylase (379 aa).

Residue His70 participates in Zn(2+) binding. The active site involves Asp72. Asp103 contributes to the Zn(2+) binding site. Glu137 functions as the Proton acceptor in the catalytic mechanism. Residues Glu138, Glu166, and His352 each contribute to the Zn(2+) site.

The protein belongs to the peptidase M20A family. DapE subfamily. In terms of assembly, homodimer. It depends on Zn(2+) as a cofactor. The cofactor is Co(2+).

The enzyme catalyses N-succinyl-(2S,6S)-2,6-diaminopimelate + H2O = (2S,6S)-2,6-diaminopimelate + succinate. It participates in amino-acid biosynthesis; L-lysine biosynthesis via DAP pathway; LL-2,6-diaminopimelate from (S)-tetrahydrodipicolinate (succinylase route): step 3/3. Its function is as follows. Catalyzes the hydrolysis of N-succinyl-L,L-diaminopimelic acid (SDAP), forming succinate and LL-2,6-diaminopimelate (DAP), an intermediate involved in the bacterial biosynthesis of lysine and meso-diaminopimelic acid, an essential component of bacterial cell walls. The sequence is that of Succinyl-diaminopimelate desuccinylase from Burkholderia cenocepacia (strain ATCC BAA-245 / DSM 16553 / LMG 16656 / NCTC 13227 / J2315 / CF5610) (Burkholderia cepacia (strain J2315)).